Here is a 53-residue protein sequence, read N- to C-terminus: ATP synthase F(0) complex subunit 8 (53 aa).

Residues 8 to 24 (PWLTTFLIVWISLIVIL) form a helical membrane-spanning segment.

Belongs to the ATPase protein 8 family. Component of the ATP synthase complex composed at least of ATP5F1A/subunit alpha, ATP5F1B/subunit beta, ATP5MC1/subunit c (homooctomer), MT-ATP6/subunit a, MT-ATP8/subunit 8, ATP5ME/subunit e, ATP5MF/subunit f, ATP5MG/subunit g, ATP5MK/subunit k, ATP5MJ/subunit j, ATP5F1C/subunit gamma, ATP5F1D/subunit delta, ATP5F1E/subunit epsilon, ATP5PF/subunit F6, ATP5PB/subunit b, ATP5PD/subunit d, ATP5PO/subunit OSCP. ATP synthase complex consists of a soluble F(1) head domain (subunits alpha(3) and beta(3)) - the catalytic core - and a membrane F(0) domain - the membrane proton channel (subunits c, a, 8, e, f, g, k and j). These two domains are linked by a central stalk (subunits gamma, delta, and epsilon) rotating inside the F1 region and a stationary peripheral stalk (subunits F6, b, d, and OSCP).

Its subcellular location is the mitochondrion membrane. Subunit 8, of the mitochondrial membrane ATP synthase complex (F(1)F(0) ATP synthase or Complex V) that produces ATP from ADP in the presence of a proton gradient across the membrane which is generated by electron transport complexes of the respiratory chain. ATP synthase complex consist of a soluble F(1) head domain - the catalytic core - and a membrane F(1) domain - the membrane proton channel. These two domains are linked by a central stalk rotating inside the F(1) region and a stationary peripheral stalk. During catalysis, ATP synthesis in the catalytic domain of F(1) is coupled via a rotary mechanism of the central stalk subunits to proton translocation. In vivo, can only synthesize ATP although its ATP hydrolase activity can be activated artificially in vitro. Part of the complex F(0) domain. This is ATP synthase F(0) complex subunit 8 from Alligator mississippiensis (American alligator).